A 564-amino-acid polypeptide reads, in one-letter code: Formate--tetrahydrofolate ligase (564 aa).

65-72 (TPLGEGKT) is a binding site for ATP.

This sequence belongs to the formate--tetrahydrofolate ligase family.

The catalysed reaction is (6S)-5,6,7,8-tetrahydrofolate + formate + ATP = (6R)-10-formyltetrahydrofolate + ADP + phosphate. It functions in the pathway one-carbon metabolism; tetrahydrofolate interconversion. The chain is Formate--tetrahydrofolate ligase from Roseiflexus castenholzii (strain DSM 13941 / HLO8).